The primary structure comprises 1030 residues: Subtilin biosynthesis protein SpaB (1030 aa).

The protein to S.epidermidis EpiB and L.lactis NisB.

Its subcellular location is the cell membrane. In terms of biological role, involved in the post-translational modification of the lantibiotic subtilin. This Bacillus subtilis protein is Subtilin biosynthesis protein SpaB (spaB).